The following is a 2383-amino-acid chain: Reducing polyketide synthase rdc5 (2383 aa).

Residues 10 to 438 form the Ketosynthase family 3 (KS3) domain; that stretch reads RAPIAIIGMS…GTNAHLVLER (429 aa). Catalysis depends on for beta-ketoacyl synthase activity residues Cys186, His321, and His361. A malonyl-CoA:ACP transacylase (MAT) domain region spans residues 550 to 881; the sequence is FVFTGQGAQW…GFAAELFRRG (332 aa). Positions 930–1066 are N-terminal hotdog fold; the sequence is KSLIGAERPS…GLFSINYEDS (137 aa). The PKS/mFAS DH domain maps to 930-1253; it reads KSLIGAERPS…LAELEVEDAD (324 aa). The segment at 932 to 1250 is dehydratase (DH) domain; sequence LIGAERPSLD…DFHLAELEVE (319 aa). His962 (proton acceptor; for dehydratase activity) is an active-site residue. The interval 1094 to 1253 is C-terminal hotdog fold; the sequence is VEVISKQAFY…LAELEVEDAD (160 aa). Catalysis depends on Asp1160, which acts as the Proton donor; for dehydratase activity. Residues 1663–1977 are enoyl reductase (ER) domain; it reads GLLNTLHFVS…QGKHVGKMIL (315 aa). Cys1776 functions as the Phosphocysteine intermediate in the catalytic mechanism. Positions 2002-2182 are ketoreductase (KR) domain; sequence ATYLFIGGLG…VSVNLGIMRD (181 aa). In terms of domain architecture, Carrier spans 2300–2377; it reads AAGPIITKAL…QFAVQIAKKS (78 aa). Position 2337 is an O-(pantetheine 4'-phosphoryl)serine (Ser2337).

The protein operates within secondary metabolite biosynthesis. In terms of biological role, reducing polyketide synthase; part of the gene cluster that mediates the biosynthesis of radicicol, a resorcylic acid lactone (RAL) that irreversibly inhibits the HSP90 molecular chaperone, an important target for cancer chemotherapy. The radicicol cluster encodes only two apparent post-PKS enzymes, a cytochrome P450 monooxygenase (rdc4) and a non-heme halogenase (rdc2) that could introduce the epoxide and the chlorine, respectively. If this cluster includes all the genes required for radicicol biosynthesis, the remaining structural features of radicicol are presumably generated by the PKSs rdc1 and rdc5. The C-2' ketone could arise if the R-PKS rdc5 and NR-PKS rdc1 each carry out four iterations, in contrast to the five iteration-three iteration split for the hypothemycin PKSs. The origin of the cis 5',6' double bond is not known. The radicicol R-PKS rdc5 ER domain may catalyze either double bond isomerization or reduction in the third iteration. This is Reducing polyketide synthase rdc5 from Metacordyceps chlamydosporia (Nematophagous fungus).